The chain runs to 343 residues: N-acetyl-gamma-glutamyl-phosphate reductase (343 aa).

Cys152 is a catalytic residue.

The protein belongs to the NAGSA dehydrogenase family. Type 1 subfamily.

The protein resides in the cytoplasm. The catalysed reaction is N-acetyl-L-glutamate 5-semialdehyde + phosphate + NADP(+) = N-acetyl-L-glutamyl 5-phosphate + NADPH + H(+). Its pathway is amino-acid biosynthesis; L-arginine biosynthesis; N(2)-acetyl-L-ornithine from L-glutamate: step 3/4. Its function is as follows. Catalyzes the NADPH-dependent reduction of N-acetyl-5-glutamyl phosphate to yield N-acetyl-L-glutamate 5-semialdehyde. The polypeptide is N-acetyl-gamma-glutamyl-phosphate reductase (Methanopyrus kandleri (strain AV19 / DSM 6324 / JCM 9639 / NBRC 100938)).